The following is a 352-amino-acid chain: GTPase Obg (352 aa).

Residues 1 to 159 (MQFIDQAEIQ…RMLRLELKLL (159 aa)) form the Obg domain. An OBG-type G domain is found at 160 to 330 (AEVGIIGLPN…LMQEIWGLLE (171 aa)). Residues 166-173 (GLPNAGKS), 191-195 (FTTLV), 213-216 (DIPG), 280-283 (NKVD), and 311-313 (SAV) contribute to the GTP site. Residues serine 173 and threonine 193 each contribute to the Mg(2+) site.

It belongs to the TRAFAC class OBG-HflX-like GTPase superfamily. OBG GTPase family. As to quaternary structure, monomer. Mg(2+) is required as a cofactor.

It is found in the cytoplasm. Functionally, an essential GTPase which binds GTP, GDP and possibly (p)ppGpp with moderate affinity, with high nucleotide exchange rates and a fairly low GTP hydrolysis rate. Plays a role in control of the cell cycle, stress response, ribosome biogenesis and in those bacteria that undergo differentiation, in morphogenesis control. This Trichodesmium erythraeum (strain IMS101) protein is GTPase Obg.